A 174-amino-acid polypeptide reads, in one-letter code: Methylamine utilization protein MauL (174 aa).

Its pathway is one-carbon metabolism; methylamine degradation. Probably involved in TTQ prosthetic group biosynthesis. The sequence is that of Methylamine utilization protein MauL (mauL) from Methylophilus methylotrophus (Bacterium W3A1).